A 314-amino-acid chain; its full sequence is Ecto-ADP-ribosyltransferase 4 (314 aa).

A signal peptide spans 1-46 (MGPLINRCKKILLPTTVPPATMRIWLLGGLLPFLLLLSGLQRPTEG). 2 disulfides stabilise this stretch: cysteine 69–cysteine 280 and cysteine 182–cysteine 231. The TR mART core domain maps to 91–276 (KNYFRMWQKA…LQLRSTGNLS (186 aa)). A glycan (N-linked (GlcNAc...) asparagine) is linked at asparagine 114. Tyrosine 126 contacts NAD(+). N-linked (GlcNAc...) asparagine glycosylation occurs at asparagine 178. Position 206 (glutamine 206) interacts with NAD(+). A glycan (N-linked (GlcNAc...) asparagine) is linked at asparagine 222. NAD(+) is bound at residue serine 240. N-linked (GlcNAc...) asparagine glycans are attached at residues asparagine 257 and asparagine 274. Alanine 285 carries GPI-anchor amidated alanine lipidation. A propeptide spans 286 to 314 (SSKKCIPDPIAIASLSFLTSVIIFSKSRV) (removed in mature form).

This sequence belongs to the Arg-specific ADP-ribosyltransferase family. As to expression, expressed in spleen and T-cells.

It is found in the cell membrane. The catalysed reaction is L-arginyl-[protein] + NAD(+) = N(omega)-(ADP-D-ribosyl)-L-arginyl-[protein] + nicotinamide + H(+). The chain is Ecto-ADP-ribosyltransferase 4 (ART4) from Homo sapiens (Human).